The sequence spans 327 residues: L-serine dehydratase/L-threonine deaminase (327 aa).

An N6-(pyridoxal phosphate)lysine modification is found at Lys41.

This sequence belongs to the serine/threonine dehydratase family. Homodimer. Pyridoxal 5'-phosphate serves as cofactor.

It is found in the cytoplasm. The catalysed reaction is L-serine = pyruvate + NH4(+). It catalyses the reaction L-threonine = 2-oxobutanoate + NH4(+). It participates in carbohydrate biosynthesis; gluconeogenesis. Functionally, catalyzes the pyridoxal-phosphate-dependent dehydrative deamination of L-threonine and L-serine to ammonia and alpha-ketobutyrate and pyruvate, respectively. This chain is L-serine dehydratase/L-threonine deaminase (SDS), found in Bos taurus (Bovine).